The primary structure comprises 301 residues: Pyridoxal 5'-phosphate synthase subunit PdxS (301 aa).

Position 31 (D31) interacts with D-ribose 5-phosphate. The active-site Schiff-base intermediate with D-ribose 5-phosphate is the K88. G160 serves as a coordination point for D-ribose 5-phosphate. K172 is a D-glyceraldehyde 3-phosphate binding site. D-ribose 5-phosphate is bound by residues G221 and 242-243 (GS).

Belongs to the PdxS/SNZ family. In terms of assembly, in the presence of PdxT, forms a dodecamer of heterodimers.

The enzyme catalyses aldehydo-D-ribose 5-phosphate + D-glyceraldehyde 3-phosphate + L-glutamine = pyridoxal 5'-phosphate + L-glutamate + phosphate + 3 H2O + H(+). The protein operates within cofactor biosynthesis; pyridoxal 5'-phosphate biosynthesis. In terms of biological role, catalyzes the formation of pyridoxal 5'-phosphate from ribose 5-phosphate (RBP), glyceraldehyde 3-phosphate (G3P) and ammonia. The ammonia is provided by the PdxT subunit. Can also use ribulose 5-phosphate and dihydroxyacetone phosphate as substrates, resulting from enzyme-catalyzed isomerization of RBP and G3P, respectively. The protein is Pyridoxal 5'-phosphate synthase subunit PdxS of Methanosarcina acetivorans (strain ATCC 35395 / DSM 2834 / JCM 12185 / C2A).